Reading from the N-terminus, the 436-residue chain is ATP-dependent protease ATPase subunit HslU (436 aa).

ATP contacts are provided by residues Ile-18, 60-65 (GVGKTE), Asp-249, Glu-314, and Arg-386.

The protein belongs to the ClpX chaperone family. HslU subfamily. In terms of assembly, a double ring-shaped homohexamer of HslV is capped on each side by a ring-shaped HslU homohexamer. The assembly of the HslU/HslV complex is dependent on binding of ATP.

Its subcellular location is the cytoplasm. ATPase subunit of a proteasome-like degradation complex; this subunit has chaperone activity. The binding of ATP and its subsequent hydrolysis by HslU are essential for unfolding of protein substrates subsequently hydrolyzed by HslV. HslU recognizes the N-terminal part of its protein substrates and unfolds these before they are guided to HslV for hydrolysis. This Chelativorans sp. (strain BNC1) protein is ATP-dependent protease ATPase subunit HslU.